Reading from the N-terminus, the 218-residue chain is MGQKVNPIGIRLGIIKDWNSKWFAGKRYAEFLIQDIKLRNDLKKKLMAAAVSKILIERPANNAVVTILTARPGVIIGKKGGGIETLRKEISDNLGVPVHLNIEEVKKPELDATLVAEGIAQQLEQRVMFRRAMKRAVTSALKAGAKGIKICVSGRLGGAEIARSEWYREGRVPLHTFRADIDYGTAESKTTYGIIGVKVWIFKGEILPQKKRSTESAQ.

Residues 38-106 (LRNDLKKKLM…PVHLNIEEVK (69 aa)) enclose the KH type-2 domain.

Belongs to the universal ribosomal protein uS3 family. As to quaternary structure, part of the 30S ribosomal subunit. Forms a tight complex with proteins S10 and S14.

Functionally, binds the lower part of the 30S subunit head. Binds mRNA in the 70S ribosome, positioning it for translation. The protein is Small ribosomal subunit protein uS3 of Legionella pneumophila (strain Paris).